Reading from the N-terminus, the 327-residue chain is Mitochondrial substrate carrier family protein A (327 aa).

Positions Met-1 to Thr-36 are disordered. Residues Met-1 to Asp-48 lie on the Mitochondrial intermembrane side of the membrane. Solcar repeat units lie at residues Leu-43–Met-132, Ile-140–Lys-224, and Pro-233–Leu-323. A helical transmembrane segment spans residues Phe-49–Leu-66. The Mitochondrial matrix segment spans residues Glu-67–Arg-106. The chain crosses the membrane as a helical span at residues Gly-107–Gly-127. At Ala-128–Arg-145 the chain is on the mitochondrial intermembrane side. Residues Met-146–Ile-166 traverse the membrane as a helical segment. Topologically, residues Lys-167 to Gly-192 are mitochondrial matrix. Residues Ile-193–Leu-213 traverse the membrane as a helical segment. The Mitochondrial intermembrane segment spans residues Asn-214–Pro-238. A helical membrane pass occupies residues Ser-239–Val-259. The Mitochondrial matrix portion of the chain corresponds to Lys-260 to Tyr-303. Residues Leu-304 to Phe-324 form a helical membrane-spanning segment. Topologically, residues Glu-325–Lys-327 are mitochondrial intermembrane.

It belongs to the mitochondrial carrier (TC 2.A.29) family.

It localises to the mitochondrion inner membrane. In terms of biological role, calcium-dependent mitochondrial solute carrier. Mitochondrial solute carriers shuttle metabolites, nucleotides, and cofactors through the mitochondrial inner membrane. This chain is Mitochondrial substrate carrier family protein A (mcfA), found in Dictyostelium discoideum (Social amoeba).